The following is a 35-amino-acid chain: Phosphoribulokinase (35 aa).

The protein belongs to the phosphoribulokinase family.

It is found in the plastid. The protein resides in the chloroplast. It catalyses the reaction D-ribulose 5-phosphate + ATP = D-ribulose 1,5-bisphosphate + ADP + H(+). Its pathway is carbohydrate biosynthesis; Calvin cycle. With respect to regulation, light regulated via thioredoxin by reversible oxidation/reduction of sulfhydryl/disulfide groups. The chain is Phosphoribulokinase from Pinus pinaster (Maritime pine).